The sequence spans 125 residues: Transposase for transposon Tn554 (125 aa).

Functionally, one of three proteins encoded by transposon Tn554 required for its transposition. The protein is Transposase for transposon Tn554 (tnpC1) of Staphylococcus aureus (strain Mu50 / ATCC 700699).